Reading from the N-terminus, the 46-residue chain is Osteocalcin 2 (46 aa).

Residues 1–43 enclose the Gla domain; the sequence is AVPAGTLSPLQMESLREVCEVNVACDEMADTAGIVAAYTXFYG. The residue at position 6 (threonine 6) is a Phosphothreonine. Glutamate 13, glutamate 17, glutamate 20, and aspartate 26 together coordinate Ca(2+). 4-carboxyglutamate occurs at positions 13, 17, and 20. Cysteine 19 and cysteine 25 are oxidised to a cystine. Glutamate 27 is modified (4-carboxyglutamate).

It belongs to the osteocalcin/matrix Gla protein family. Gamma-carboxyglutamate residues are formed by vitamin K dependent carboxylation by GGCX. These residues are essential for the binding of calcium.

The protein localises to the secreted. Functionally, the carboxylated form is one of the main organic components of the bone matrix, which constitutes 1-2% of the total bone protein. The carboxylated form binds strongly to apatite and calcium. This is Osteocalcin 2 from Solea senegalensis (Senegalese sole).